Reading from the N-terminus, the 593-residue chain is 3-hydroxy-3-methylglutaryl-coenzyme A reductase (593 aa).

Residues 1–36 form a disordered region; the sequence is MDVRRRSINSIHQIPSVGGTAPPMLKPKQPTKVDAV. 2 consecutive transmembrane segments (helical) span residues 52 to 72 and 94 to 114; these read LYITNGVFFTLFFTVVYYLLV and AIFTFVASFIYLLGFFGIGLV. The segment at 115 to 177 is linker; that stretch reads QPFTSRSSHD…PVPISPPSSE (63 aa). The interval 178–593 is catalytic; the sequence is EDEEIIKSVV…SNKDVTKASS (416 aa). Glutamate 272 serves as the catalytic Charge relay system. Asparagine 336 is a glycosylation site (N-linked (GlcNAc...) asparagine). The active-site Charge relay system is the lysine 404. The N-linked (GlcNAc...) asparagine glycan is linked to asparagine 449. Residue aspartate 480 is the Charge relay system of the active site. Catalysis depends on histidine 578, which acts as the Proton donor. An N-linked (GlcNAc...) asparagine glycan is attached at asparagine 582.

This sequence belongs to the HMG-CoA reductase family.

The protein resides in the endoplasmic reticulum membrane. The enzyme catalyses (R)-mevalonate + 2 NADP(+) + CoA = (3S)-3-hydroxy-3-methylglutaryl-CoA + 2 NADPH + 2 H(+). Its pathway is metabolic intermediate biosynthesis; (R)-mevalonate biosynthesis; (R)-mevalonate from acetyl-CoA: step 3/3. In terms of biological role, catalyzes the synthesis of mevalonate. The specific precursor of all isoprenoid compounds present in plants. In Camptotheca acuminata (Happy tree), this protein is 3-hydroxy-3-methylglutaryl-coenzyme A reductase.